The chain runs to 187 residues: Elongation factor P (187 aa).

It belongs to the elongation factor P family.

Its subcellular location is the cytoplasm. It participates in protein biosynthesis; polypeptide chain elongation. In terms of biological role, involved in peptide bond synthesis. Stimulates efficient translation and peptide-bond synthesis on native or reconstituted 70S ribosomes in vitro. Probably functions indirectly by altering the affinity of the ribosome for aminoacyl-tRNA, thus increasing their reactivity as acceptors for peptidyl transferase. This is Elongation factor P from Azobacteroides pseudotrichonymphae genomovar. CFP2.